A 232-amino-acid chain; its full sequence is Small ribosomal subunit protein uS2 (232 aa).

Belongs to the universal ribosomal protein uS2 family.

This Natranaerobius thermophilus (strain ATCC BAA-1301 / DSM 18059 / JW/NM-WN-LF) protein is Small ribosomal subunit protein uS2.